Consider the following 283-residue polypeptide: Pantothenate synthetase (283 aa).

30–37 (MGNLHDGH) lines the ATP pocket. Catalysis depends on histidine 37, which acts as the Proton donor. Glutamine 61 contributes to the (R)-pantoate binding site. Glutamine 61 is a beta-alanine binding site. Residue 149 to 152 (GEKD) coordinates ATP. Glutamine 155 contacts (R)-pantoate. Residues valine 178 and 186 to 189 (LSSR) each bind ATP.

The protein belongs to the pantothenate synthetase family. In terms of assembly, homodimer.

It localises to the cytoplasm. It carries out the reaction (R)-pantoate + beta-alanine + ATP = (R)-pantothenate + AMP + diphosphate + H(+). It functions in the pathway cofactor biosynthesis; (R)-pantothenate biosynthesis; (R)-pantothenate from (R)-pantoate and beta-alanine: step 1/1. Functionally, catalyzes the condensation of pantoate with beta-alanine in an ATP-dependent reaction via a pantoyl-adenylate intermediate. This chain is Pantothenate synthetase, found in Salmonella arizonae (strain ATCC BAA-731 / CDC346-86 / RSK2980).